A 79-amino-acid chain; its full sequence is MGGISIWQLLIVALIVVLLFGTKKLRSLGGDLGGAVKGFKNAMSSEEDKKALEDTEAAKTAQTTQQATEKKPESNKEQA.

Residues M1–G21 traverse the membrane as a helical segment. The tract at residues M43–A79 is disordered. Positions E46–A57 are enriched in basic and acidic residues. The segment covering A58–A67 has biased composition (low complexity). Over residues T68 to A79 the composition is skewed to basic and acidic residues.

Belongs to the TatA/E family. The Tat system comprises two distinct complexes: a TatABC complex, containing multiple copies of TatA, TatB and TatC subunits, and a separate TatA complex, containing only TatA subunits. Substrates initially bind to the TatABC complex, which probably triggers association of the separate TatA complex to form the active translocon.

The protein localises to the cell inner membrane. Functionally, part of the twin-arginine translocation (Tat) system that transports large folded proteins containing a characteristic twin-arginine motif in their signal peptide across membranes. TatA could form the protein-conducting channel of the Tat system. The protein is Sec-independent protein translocase protein TatA of Shewanella baltica (strain OS223).